The chain runs to 610 residues: tRNA uridine 5-carboxymethylaminomethyl modification enzyme MnmG (610 aa).

14–19 (GAGHAG) contributes to the FAD binding site. 274–288 (GPRYCPSIEDKIVKF) provides a ligand contact to NAD(+).

The protein belongs to the MnmG family. In terms of assembly, homodimer. Heterotetramer of two MnmE and two MnmG subunits. The cofactor is FAD.

It is found in the cytoplasm. NAD-binding protein involved in the addition of a carboxymethylaminomethyl (cmnm) group at the wobble position (U34) of certain tRNAs, forming tRNA-cmnm(5)s(2)U34. The sequence is that of tRNA uridine 5-carboxymethylaminomethyl modification enzyme MnmG from Chlamydia trachomatis serovar A (strain ATCC VR-571B / DSM 19440 / HAR-13).